The following is a 199-amino-acid chain: Peroxisomal membrane protein PEX17 (199 aa).

It is found in the peroxisome membrane. In terms of biological role, component of the peroxisomal translocation machinery with PEX13 and PEX14. Interacts indirectly with the PTS1 receptor (PAS10/PEX5) and directly binds to PEX14. Required for import of both PTS1 and PTS2 proteins. This is Peroxisomal membrane protein PEX17 (PEX17) from Saccharomyces cerevisiae (strain ATCC 204508 / S288c) (Baker's yeast).